The primary structure comprises 231 residues: MTKRVALEPAFILHRRPYSNTSLILELLTPNHGRVCALARSARGLKSRYKGKLELFSPLLISWSGRSDLKFLGDVEANGMPYLLEGEALLCGFYLNELLIRLLHHDDPYLRLFHHYQNTLEKLVNGRLEATLRCFEKQLLDELGYGLPLSCDVEMKLPFKPDQFYQYLPDRGFLLCEKSEERDVFSGKSLLALQEESFSDESSLKEIKYLMRLTLNRLLGKKPLKTRELLF.

This sequence belongs to the RecO family.

Functionally, involved in DNA repair and RecF pathway recombination. In Coxiella burnetii (strain CbuK_Q154) (Coxiella burnetii (strain Q154)), this protein is DNA repair protein RecO.